The following is a 154-amino-acid chain: Large ribosomal subunit protein uL13 (154 aa).

The protein belongs to the universal ribosomal protein uL13 family. Part of the 50S ribosomal subunit.

Its function is as follows. This protein is one of the early assembly proteins of the 50S ribosomal subunit, although it is not seen to bind rRNA by itself. It is important during the early stages of 50S assembly. The chain is Large ribosomal subunit protein uL13 from Bartonella henselae (strain ATCC 49882 / DSM 28221 / CCUG 30454 / Houston 1) (Rochalimaea henselae).